Consider the following 331-residue polypeptide: Gamma-parvin (331 aa).

N-acetylmethionine is present on M1. The disordered stretch occupies residues 17–39; sequence EPPAEEELSKGGKKKYLPPTSRK. 2 consecutive Calponin-homology (CH) domains span residues 44–151 and 210–317; these read EELQ…KRFQ and NAVK…CKHT.

This sequence belongs to the parvin family. In terms of assembly, interacts with ILK; the interaction promotes the establishment of cell polarity required for leukocyte migration. Interacts with ARHGEF6; the guanine nucleotide exchange factor activity of ARHGEF6 is essential for the PARVG-induced enhancement of cell spreading. As to expression, expressed predominantly in lymphoid organs, including spleen, thymus, lymph node, bone marrow and peripheral blood leukocytes and moderately in the digestive tract, including stomach, duodenum, jejunum, ileum, ileocecum and appendix, as well as in lung and liver. Also expressed in tumors, but at a lower level than in the corresponding normal tissues.

Its subcellular location is the cell junction. The protein localises to the focal adhesion. It is found in the cell membrane. It localises to the cytoplasm. The protein resides in the cytoskeleton. In terms of biological role, plays a role with ILK in promoting the cell adhesion and spreading of leukocytes. This Homo sapiens (Human) protein is Gamma-parvin (PARVG).